The chain runs to 431 residues: Gamma-glutamyl phosphate reductase (431 aa).

It belongs to the gamma-glutamyl phosphate reductase family.

The protein localises to the cytoplasm. The catalysed reaction is L-glutamate 5-semialdehyde + phosphate + NADP(+) = L-glutamyl 5-phosphate + NADPH + H(+). It functions in the pathway amino-acid biosynthesis; L-proline biosynthesis; L-glutamate 5-semialdehyde from L-glutamate: step 2/2. Functionally, catalyzes the NADPH-dependent reduction of L-glutamate 5-phosphate into L-glutamate 5-semialdehyde and phosphate. The product spontaneously undergoes cyclization to form 1-pyrroline-5-carboxylate. This is Gamma-glutamyl phosphate reductase from Beijerinckia indica subsp. indica (strain ATCC 9039 / DSM 1715 / NCIMB 8712).